Here is a 366-residue protein sequence, read N- to C-terminus: 5-hydroxytryptamine receptor 1F (366 aa).

Residues 1–24 are Extracellular-facing; sequence MDFLNSSDQNLTSEELLNRMPSKI. 2 N-linked (GlcNAc...) asparagine glycosylation sites follow: Asn5 and Asn10. The chain crosses the membrane as a helical span at residues 25–49; it reads LVSLTLSGLALMTTTINCLVITAII. Residues 50–59 lie on the Cytoplasmic side of the membrane; that stretch reads VTRKLHHPAN. A helical membrane pass occupies residues 60–81; it reads YLICSLAVTDFLVAVLVMPFSI. Topologically, residues 82–96 are extracellular; it reads VYIVRESWIMGQGLC. A disulfide bond links Cys96 and Cys172. Residues 97–119 traverse the membrane as a helical segment; it reads DLWLSVDIICCTCSILHLSAIAL. Asp103 and Cys107 together coordinate serotonin. Residues 120–122 carry the DRY motif; important for ligand-induced conformation changes motif; the sequence is DRY. Residues 120–139 lie on the Cytoplasmic side of the membrane; the sequence is DRYRAITDAVEYARKRTPRH. The helical transmembrane segment at 140 to 159 threads the bilayer; the sequence is AGITITTVWVISVFISVPPL. Over 160–178 the chain is Extracellular; the sequence is FWRHQGNSRDDQCIIKHDH. Residues 179 to 202 traverse the membrane as a helical segment; the sequence is IVSTIYSTFGAFYIPLVLILILYY. Topologically, residues 203–291 are cytoplasmic; the sequence is KIYRAARTLY…KISGTRERKA (89 aa). A helical transmembrane segment spans residues 292–315; sequence ATTLGLILGAFVICWLPFFVKELV. Residues 316–327 lie on the Extracellular side of the membrane; it reads VNICEKCKISEE. The chain crosses the membrane as a helical span at residues 328-350; it reads MSNFLAWLGYLNSLINPLIYTIF. Positions 343–347 match the NPxxY motif; important for ligand-induced conformation changes and signaling motif; it reads NPLIY. Over 351–366 the chain is Cytoplasmic; sequence NEDFKKAFQKLVRCRN.

Belongs to the G-protein coupled receptor 1 family.

It localises to the cell membrane. Functionally, G-protein coupled receptor for 5-hydroxytryptamine (serotonin). Also functions as a receptor for various alkaloids and psychoactive substances. Ligand binding causes a conformation change that triggers signaling via guanine nucleotide-binding proteins (G proteins) and modulates the activity of downstream effectors, such as adenylate cyclase. HTR1F is coupled to G(i)/G(o) G alpha proteins and mediates inhibitory neurotransmission by inhibiting adenylate cyclase activity. The chain is 5-hydroxytryptamine receptor 1F (Htr1f) from Rattus norvegicus (Rat).